A 204-amino-acid polypeptide reads, in one-letter code: uncharacterized protein (204 aa).

Positions 1 to 10 (MQQAITQQEK) are enriched in polar residues. 2 disordered regions span residues 1 to 20 (MQQA…LPNR) and 70 to 99 (DEAR…KNTE). Positions 131 to 204 (VRDSKKFGLQ…TVTDCVVIGM (74 aa)) constitute an SPOR domain.

It to E.coli FtsN repeat regions.

This is an uncharacterized protein from Haemophilus influenzae (strain ATCC 51907 / DSM 11121 / KW20 / Rd).